Here is a 173-residue protein sequence, read N- to C-terminus: Lipoprotein signal peptidase (173 aa).

Helical transmembrane passes span 67–87 and 92–112; these read WISL…PHLG and MGFG…FAFG. Residues Asp-116 and Asp-132 contribute to the active site. A helical membrane pass occupies residues 125-145; sequence FPVFNGADIAINLGLACLLIG. The tract at residues 151-173 is disordered; the sequence is SRTPAPARPASKQIREPTDTTGG. A compositionally biased stretch (basic and acidic residues) spans 163 to 173; sequence QIREPTDTTGG.

The protein belongs to the peptidase A8 family.

The protein resides in the cell inner membrane. It carries out the reaction Release of signal peptides from bacterial membrane prolipoproteins. Hydrolyzes -Xaa-Yaa-Zaa-|-(S,diacylglyceryl)Cys-, in which Xaa is hydrophobic (preferably Leu), and Yaa (Ala or Ser) and Zaa (Gly or Ala) have small, neutral side chains.. It participates in protein modification; lipoprotein biosynthesis (signal peptide cleavage). In terms of biological role, this protein specifically catalyzes the removal of signal peptides from prolipoproteins. The chain is Lipoprotein signal peptidase from Gloeobacter violaceus (strain ATCC 29082 / PCC 7421).